The sequence spans 132 residues: Vesicle transport protein GOT1A (132 aa).

The Cytoplasmic portion of the chain corresponds to 1-16 (MISITEWQKIGVGTTG). The helical transmembrane segment at 17–37 (FGIFFILFGMLLYFDSVLLAF) threads the bilayer. The Lumenal portion of the chain corresponds to 38–39 (GN). A helical transmembrane segment spans residues 40-60 (LLFLTGLSLIIGLRRTFSFFF). The Cytoplasmic portion of the chain corresponds to 61 to 68 (QRHKFKGT). A helical transmembrane segment spans residues 69 to 89 (SFFLGGVVIVLLRWPLLGMCL). At 90 to 100 (ETYGFFSLFRG) the chain is on the lumenal side. Residues 101–121 (FFPVAFGFLGSASNIPFLSAL) traverse the membrane as a helical segment. Topologically, residues 122–132 (FQRLQGTSSMV) are cytoplasmic.

The protein belongs to the GOT1 family.

It is found in the golgi apparatus membrane. May be involved in fusion of ER-derived transport vesicles with the Golgi complex. The sequence is that of Vesicle transport protein GOT1A from Bos taurus (Bovine).